Reading from the N-terminus, the 357-residue chain is Protein pelota homolog (357 aa).

The protein belongs to the eukaryotic release factor 1 family. Pelota subfamily. As to quaternary structure, monomer. It depends on a divalent metal cation as a cofactor.

The protein localises to the cytoplasm. In terms of biological role, may function in recognizing stalled ribosomes, interact with stem-loop structures in stalled mRNA molecules, and effect endonucleolytic cleavage of the mRNA. May play a role in the release non-functional ribosomes and degradation of damaged mRNAs. Has endoribonuclease activity. The sequence is that of Protein pelota homolog from Thermococcus kodakarensis (strain ATCC BAA-918 / JCM 12380 / KOD1) (Pyrococcus kodakaraensis (strain KOD1)).